The following is a 476-amino-acid chain: Eukaryotic translation initiation factor 3 subunit L (476 aa).

One can recognise a PCI domain in the interval 257–452; it reads DAIRMFSHIL…DLDYALENDL (196 aa).

The protein belongs to the eIF-3 subunit L family. As to quaternary structure, component of the eukaryotic translation initiation factor 3 (eIF-3) complex.

Its subcellular location is the cytoplasm. In terms of biological role, component of the eukaryotic translation initiation factor 3 (eIF-3) complex, which is involved in protein synthesis of a specialized repertoire of mRNAs and, together with other initiation factors, stimulates binding of mRNA and methionyl-tRNAi to the 40S ribosome. The eIF-3 complex specifically targets and initiates translation of a subset of mRNAs involved in cell proliferation. This Aspergillus oryzae (strain ATCC 42149 / RIB 40) (Yellow koji mold) protein is Eukaryotic translation initiation factor 3 subunit L.